Here is a 122-residue protein sequence, read N- to C-terminus: MNYLAVLVGGGVGALVRYLVSIFIQKFVPNFPLGTMVINTTGAFLIGFLSIYLTEVIDAPPNIRLLLITGFLGGYTTFSTFTLEGIGLINNGDYLKAFYYIVGTNVIGFLFVALGRFLGGLL.

The next 4 helical transmembrane spans lie at 4-24 (LAVL…SIFI), 33-53 (LGTM…SIYL), 66-86 (LLIT…LEGI), and 95-115 (LKAF…VALG). Na(+) is bound by residues G73 and T76.

Belongs to the fluoride channel Fluc/FEX (TC 1.A.43) family.

It is found in the cell inner membrane. The catalysed reaction is fluoride(in) = fluoride(out). Its activity is regulated as follows. Na(+) is not transported, but it plays an essential structural role and its presence is essential for fluoride channel function. Its function is as follows. Fluoride-specific ion channel. Important for reducing fluoride concentration in the cell, thus reducing its toxicity. The sequence is that of Fluoride-specific ion channel FluC from Hydrogenobaculum sp. (strain Y04AAS1).